The chain runs to 397 residues: Lysophospholipid transporter LplT (397 aa).

The Periplasmic portion of the chain corresponds to 1–17 (MSESVHTNTSLWSKGMK). Residues 18-38 (AVIVAQFLSAFGDNALLFATL) traverse the membrane as a helical segment. At 39–52 (ALLKAQFYPEWSQP) the chain is on the cytoplasmic side. The helical transmembrane segment at 53–73 (ILQMVFVGAYILFAPFVGQVA) threads the bilayer. Residues 74–90 (DSFAKGRVMMFANGLKL) lie on the Periplasmic side of the membrane. The chain crosses the membrane as a helical span at residues 91-111 (LGAASICFGINPFLGYTLVGV). The Cytoplasmic portion of the chain corresponds to 112–144 (GAAAYSPAKYGILGELTTGSKLVKANGLMEAST). The helical transmembrane segment at 145 to 165 (IAAILLGSVAGGVLADWHVLV) threads the bilayer. Residue A166 is a topological domain, periplasmic. The helical transmembrane segment at 167 to 187 (LAACALAYGGAVVANIYIPKL) threads the bilayer. Over 188–226 (AAARPGQSWNLISMTRSFLNACTSLWRNGETRFSLVGTS) the chain is Cytoplasmic. Residues 227–247 (LFWGAGVTLRFLLVLWVPVAL) traverse the membrane as a helical segment. Topologically, residues 248–256 (GITDNATPT) are periplasmic. The helical transmembrane segment at 257–277 (YLNAMVAIGIVVGAGAAAKLV) threads the bilayer. Residues 278-280 (TLE) are Cytoplasmic-facing. The chain crosses the membrane as a helical span at residues 281–301 (TVSRCMPAGILIGVVVLIFSL). The Periplasmic portion of the chain corresponds to 302–304 (QHE). The helical transmembrane segment at 305 to 325 (LLPAYALLMLIGVLGGFFVVP) threads the bilayer. The Cytoplasmic portion of the chain corresponds to 326-343 (LNALLQERGKKSVGAGNA). A helical transmembrane segment spans residues 344–364 (IAVQNLGENSAMLLMLGIYSL). The Periplasmic portion of the chain corresponds to 365–366 (AV). The helical transmembrane segment at 367 to 387 (MVGIPVVPIGIGFGALFALAI) threads the bilayer. Residues 388–397 (TALWIWQRRH) lie on the Cytoplasmic side of the membrane.

Belongs to the major facilitator superfamily. LplT (TC 2.A.1.42) family.

The protein localises to the cell inner membrane. Functionally, catalyzes the facilitated diffusion of 2-acyl-glycero-3-phosphoethanolamine (2-acyl-GPE) into the cell. In Escherichia coli O7:K1 (strain IAI39 / ExPEC), this protein is Lysophospholipid transporter LplT.